The sequence spans 443 residues: Tubulin epsilon and delta complex protein 2 (443 aa).

Residues 8 to 33 (RRLVAELRDALDSCAERQRQLEQSLR) adopt a coiled-coil conformation. Disordered stretches follow at residues 45–72 (AETP…PSPQ) and 93–146 (GLSK…PWVP). Residues 106–124 (LKSGSASTATKASAPPSTS) are compositionally biased toward low complexity.

As to quaternary structure, interacts with TEDC1. Found in a complex with TEDC1, TEDC2, TUBE1 and TUBD1.

It localises to the cell projection. It is found in the cilium. The protein localises to the cytoplasm. The protein resides in the cytoskeleton. Its subcellular location is the microtubule organizing center. It localises to the centrosome. It is found in the centriole. In terms of biological role, acts as a positive regulator of ciliary hedgehog signaling. Required for centriole stability. This chain is Tubulin epsilon and delta complex protein 2, found in Bos taurus (Bovine).